We begin with the raw amino-acid sequence, 218 residues long: Adenylate kinase (218 aa).

Residue 10 to 15 (GAGKGT) participates in ATP binding. The interval 30–59 (STGDMLRAAVKAGTPLGLEAKKVMDAGGLV) is NMP. AMP-binding positions include Thr31, Arg36, 57-59 (GLV), 85-88 (GFPR), and Gln92. Residues 122 to 159 (ERRVHPASGRSYHVRFNPPKAEGVDDVTGEPLVQRDDD) are LID. ATP contacts are provided by residues Arg123 and 132–133 (SY). Residues Arg156 and Arg167 each coordinate AMP. Gly203 is a binding site for ATP.

This sequence belongs to the adenylate kinase family. Monomer.

It is found in the cytoplasm. It carries out the reaction AMP + ATP = 2 ADP. It functions in the pathway purine metabolism; AMP biosynthesis via salvage pathway; AMP from ADP: step 1/1. Functionally, catalyzes the reversible transfer of the terminal phosphate group between ATP and AMP. Plays an important role in cellular energy homeostasis and in adenine nucleotide metabolism. The chain is Adenylate kinase from Bordetella pertussis (strain Tohama I / ATCC BAA-589 / NCTC 13251).